Consider the following 365-residue polypeptide: Peptide chain release factor 1 (365 aa).

Glutamine 240 bears the N5-methylglutamine mark.

It belongs to the prokaryotic/mitochondrial release factor family. In terms of processing, methylated by PrmC. Methylation increases the termination efficiency of RF1.

The protein localises to the cytoplasm. Its function is as follows. Peptide chain release factor 1 directs the termination of translation in response to the peptide chain termination codons UAG and UAA. This Bifidobacterium animalis subsp. lactis (strain AD011) protein is Peptide chain release factor 1.